The following is a 142-amino-acid chain: Small ribosomal subunit protein bS6 (142 aa).

Residues 110-142 form a disordered region; the sequence is NKKPSHAKEKHEKTEHAHSHHTEEAGSKESHSE.

The protein belongs to the bacterial ribosomal protein bS6 family.

Binds together with bS18 to 16S ribosomal RNA. In Helicobacter acinonychis (strain Sheeba), this protein is Small ribosomal subunit protein bS6.